The primary structure comprises 887 residues: Alpha-amylase 3, chloroplastic (887 aa).

A chloroplast-targeting transit peptide spans Met-1–Ser-55. A disulfide bond links Cys-499 and Cys-587. Substrate is bound by residues Tyr-545–Met-546 and Arg-664–Arg-669. Catalysis depends on Asp-666, which acts as the Nucleophile. Glu-691 acts as the Proton donor in catalysis. Residues Trp-693, Ser-695, Gln-712, Lys-754, Gly-760–Trp-762, His-773, Gln-779, Lys-857, and Trp-884 contribute to the substrate site.

The protein belongs to the glycosyl hydrolase 13 family. It depends on Ca(2+) as a cofactor. As to expression, expressed in developing siliques.

The protein resides in the plastid. It localises to the chloroplast. It carries out the reaction Endohydrolysis of (1-&gt;4)-alpha-D-glucosidic linkages in polysaccharides containing three or more (1-&gt;4)-alpha-linked D-glucose units.. With respect to regulation, redox-regulated, with the highest activity under reducing conditions. The midpoint redox potential is -329 mV. The disulfide bridge between Cys-499 and Cys-587 inhibits catalysis. Inhibited by CuCl(2) and H(2)O(2). Its function is as follows. Possesses endoamylolytic activity in vitro, but seems not required for breakdown of transitory starch in leaves. May be involved in the determination of the final structure of glucans by shortening long linear phospho-oligosaccharides in the chloroplast stroma. Can act on both soluble and insoluble glucan substrates to release small linear and branched malto-oligosaccharides. Works synergistically with beta-amylase toward efficient starch degradation. Has activity against p-nitrophenyl maltoheptaoside (BPNP-G7), amylopectin and beta-limit dextrin. Involved in stress-induced starch degradation. The protein is Alpha-amylase 3, chloroplastic of Arabidopsis thaliana (Mouse-ear cress).